The sequence spans 306 residues: Curved DNA-binding protein (306 aa).

The region spanning aspartate 5–tryptophan 69 is the J domain.

Its subcellular location is the cytoplasm. The protein resides in the nucleoid. In terms of biological role, DNA-binding protein that preferentially recognizes a curved DNA sequence. It is probably a functional analog of DnaJ; displays overlapping activities with DnaJ, but functions under different conditions, probably acting as a molecular chaperone in an adaptive response to environmental stresses other than heat shock. Lacks autonomous chaperone activity; binds native substrates and targets them for recognition by DnaK. Its activity is inhibited by the binding of CbpM. In Shigella flexneri, this protein is Curved DNA-binding protein.